We begin with the raw amino-acid sequence, 447 residues long: tRNA-2-methylthio-N(6)-dimethylallyladenosine synthase (447 aa).

One can recognise an MTTase N-terminal domain in the interval 4 to 120; sequence RSFFIKTYGC…INELLERSRT (117 aa). Residues cysteine 13, cysteine 49, cysteine 83, cysteine 161, cysteine 165, and cysteine 168 each contribute to the [4Fe-4S] cluster site. A Radical SAM core domain is found at 147–382; that stretch reads HEGEFRKFVT…QARQDEIGLE (236 aa). Residues 385–446 form the TRAM domain; it reads QEYIGTTQEV…QHSLRGSIVE (62 aa).

The protein belongs to the methylthiotransferase family. MiaB subfamily. As to quaternary structure, monomer. [4Fe-4S] cluster is required as a cofactor.

The protein resides in the cytoplasm. It carries out the reaction N(6)-dimethylallyladenosine(37) in tRNA + (sulfur carrier)-SH + AH2 + 2 S-adenosyl-L-methionine = 2-methylsulfanyl-N(6)-dimethylallyladenosine(37) in tRNA + (sulfur carrier)-H + 5'-deoxyadenosine + L-methionine + A + S-adenosyl-L-homocysteine + 2 H(+). Catalyzes the methylthiolation of N6-(dimethylallyl)adenosine (i(6)A), leading to the formation of 2-methylthio-N6-(dimethylallyl)adenosine (ms(2)i(6)A) at position 37 in tRNAs that read codons beginning with uridine. This is tRNA-2-methylthio-N(6)-dimethylallyladenosine synthase from Desulfotalea psychrophila (strain LSv54 / DSM 12343).